Reading from the N-terminus, the 334-residue chain is Ornithine carbamoyltransferase (334 aa).

Carbamoyl phosphate is bound by residues 57 to 60 (STRT), Gln-84, Arg-108, and 135 to 138 (HPTQ). L-ornithine-binding positions include Asn-169, Asp-233, and 237-238 (SM). Carbamoyl phosphate-binding positions include 275–276 (CL) and Arg-320.

The protein belongs to the aspartate/ornithine carbamoyltransferase superfamily. OTCase family.

Its subcellular location is the cytoplasm. It catalyses the reaction carbamoyl phosphate + L-ornithine = L-citrulline + phosphate + H(+). The protein operates within amino-acid biosynthesis; L-arginine biosynthesis; L-arginine from L-ornithine and carbamoyl phosphate: step 1/3. Functionally, reversibly catalyzes the transfer of the carbamoyl group from carbamoyl phosphate (CP) to the N(epsilon) atom of ornithine (ORN) to produce L-citrulline. The chain is Ornithine carbamoyltransferase from Vibrio vulnificus (strain YJ016).